The chain runs to 463 residues: Na(+)/H(+) antiporter NhaA 3 (463 aa).

The next 11 helical transmembrane spans lie at 28 to 48 (FLATEAGGAVLLLLAAVAALL), 79 to 99 (LHHWVNDGAMAIFFAVVGLEI), 114 to 134 (IAVPALGAIGGLILPAAIYFV), 144 to 164 (GWGIPMSTDTAFVIGILALFG), 173 to 193 (LFLLTLAIVDDIGAITVVGIF), 196 to 216 (DHLNPVGLAVAGATVLAILGL), 232 to 252 (LVLWGAIHVSGVHATLAGVLV), 305 to 325 (VLHPISAFVVVPVFGLANAGV), 344 to 364 (VAAALIAGNACGISVAGVAAI), 377 to 397 (YGHLLGAATLAGIGFTISLFI), and 413 to 433 (IGILAGSLVAALAGTVILRVL). The disordered stretch occupies residues 444 to 463 (TDEPVPRLPPRPWRAPVPAK). The span at 449–463 (PRLPPRPWRAPVPAK) shows a compositional bias: pro residues.

Belongs to the NhaA Na(+)/H(+) (TC 2.A.33) antiporter family.

The protein localises to the cell membrane. It catalyses the reaction Na(+)(in) + 2 H(+)(out) = Na(+)(out) + 2 H(+)(in). Functionally, na(+)/H(+) antiporter that extrudes sodium in exchange for external protons. The polypeptide is Na(+)/H(+) antiporter NhaA 3 (Frankia alni (strain DSM 45986 / CECT 9034 / ACN14a)).